We begin with the raw amino-acid sequence, 79 residues long: U1-plectoxin-Pt1c (79 aa).

Residues 1–18 form the signal peptide; it reads HLILASALICALVVCTFA. Positions 19-31 are excised as a propeptide; sequence EEQVNVPFLPDER. Cystine bridges form between Cys-35–Cys-49, Cys-42–Cys-55, Cys-48–Cys-66, Cys-52–Cys-75, and Cys-57–Cys-64. Positions 78–79 are excised as a propeptide; sequence RR.

Belongs to the neurotoxin 02 (plectoxin) family. 02 (plectoxin) subfamily. As to expression, expressed by the venom gland.

The protein localises to the secreted. Potent toxin that may paralyze and/or kill insect pests such as H.virescens (lepidoptera), S.exigua (beet armyworm) and M.sexta (tobacco hornworm). In Plectreurys tristis (Spider), this protein is U1-plectoxin-Pt1c.